A 1230-amino-acid chain; its full sequence is Serine/threonine-protein kinase CST20 (1230 aa).

Polar residues predominate over residues 1–20 (MSILSENNPTPTSITDPNKS). 2 disordered regions span residues 1–384 (MSIL…TAHN) and 413–470 (SSLE…HSQE). 2 stretches are compositionally biased toward low complexity: residues 57 to 70 (NTTSANTSSLSLGS) and 96 to 125 (SGSGDIDDSQQSHNNNNNNNNNNNESNPES). Basic and acidic residues predominate over residues 150 to 161 (HQGDDSDNEKQY). Polar residues-rich tracts occupy residues 175-197 (DSYSPGTLESPGTLNALETNNVS), 207-224 (TSSLEDLSLSLQHQNENA), and 237-246 (PTSKTSSFHD). Low complexity predominate over residues 248 to 257 (SSVISSSTSV). Polar residues-rich tracts occupy residues 262 to 277 (SNPTSTRGSHLSSYKS) and 311 to 330 (DTLSSATNSPNLLRNDTLQG). 2 stretches are compositionally biased toward low complexity: residues 349–381 (NTSATSRNTSGTSTSTVVKNSRSGTSKSTSTST) and 439–468 (KVRGVFSSMFGKNKSTSSSSSSNSGSNSHS). One can recognise a CRIB domain in the interval 475–488 (ISTPFNAKHLAHVG). Disordered regions lie at residues 545–831 (FHFD…ALAD) and 867–919 (LREK…KQAA). Residues 550 to 561 (NKSSSSGWSNEN) show a composition bias toward polar residues. Gly residues predominate over residues 570–581 (SNSGSGSGGGGA). Over residues 604–613 (ITPSQSMPTK) the composition is skewed to polar residues. Basic and acidic residues predominate over residues 614–628 (TESKQSENQHPHEDN). A compositionally biased stretch (polar residues) spans 629 to 642 (ATQYTPRTPTSHVQ). 3 stretches are compositionally biased toward low complexity: residues 670 to 683 (PSSQSLPRSDSQSD), 696 to 710 (SPSKIKIRSISSKSL), and 736 to 749 (SIPKSKSHSASLSS). Residues 750-761 (QLRPATNGSTTA) show a composition bias toward polar residues. Residues 789–807 (APPPPPSAPPAPPVPPAPP) are compositionally biased toward pro residues. Over residues 811 to 826 (LSEQTSEIPQQRTAPS) the composition is skewed to polar residues. The segment covering 867 to 876 (LREKNERQNR) has biased composition (basic and acidic residues). The segment covering 877–892 (QQETGQNNADTASGGS) has biased composition (polar residues). One can recognise a Protein kinase domain in the interval 953–1205 (YVDLVKIGQG…ADELLHDNFI (253 aa)). ATP contacts are provided by residues 959–967 (IGQGASGGV) and K983. D1073 functions as the Proton acceptor in the catalytic mechanism.

The protein belongs to the protein kinase superfamily. STE Ser/Thr protein kinase family. STE20 subfamily.

The protein resides in the cytoplasm. The protein localises to the nucleus. The enzyme catalyses L-seryl-[protein] + ATP = O-phospho-L-seryl-[protein] + ADP + H(+). It catalyses the reaction L-threonyl-[protein] + ATP = O-phospho-L-threonyl-[protein] + ADP + H(+). Functionally, MAP4K component of the MAPK pathway required for the mating pheromone response, and the regulation of cell polarity and cell cycle. Phosphorylates histone H2B to form H2BS10ph. Required for hyphal formation and virulence. The chain is Serine/threonine-protein kinase CST20 (CST20) from Candida albicans (Yeast).